Consider the following 108-residue polypeptide: Nucleoid-associated protein PLES_37951 (108 aa).

2 disordered regions span residues 1–25 (MMKGGMAGLMKQAQQMQEKMQKMQE) and 87–108 (NQEKMSGFTSGMQLPPGFKMPF). Over residues 87 to 98 (NQEKMSGFTSGM) the composition is skewed to polar residues.

It belongs to the YbaB/EbfC family. As to quaternary structure, homodimer.

It is found in the cytoplasm. The protein resides in the nucleoid. Binds to DNA and alters its conformation. May be involved in regulation of gene expression, nucleoid organization and DNA protection. The sequence is that of Nucleoid-associated protein PLES_37951 from Pseudomonas aeruginosa (strain LESB58).